We begin with the raw amino-acid sequence, 213 residues long: MASQAVSGLSRQVRCFSTSVVRPFAKLVRPPVQIYGIEGRYATALYSAASKQNKLEQVEKELLRVAQILKEPKVAASIMNPYVKRSVKVKSLSDMTAKEKFSPLTSNLINLLAENGRLSSTPGVISAFSTMMSVHRGEVPCSVTTASPLDEATLTELKTVLKSFLSKGQILKLEVKVDPSIMGGMIVRIGEKYVDMSAKTKIQKLSRAMREIF.

The transit peptide at Met-1–Pro-23 directs the protein to the mitochondrion. An SIFI-degron motif is present at residues Ala-5–Pro-23. N6-acetyllysine occurs at positions 54, 60, 70, and 73. Lys-90 is modified (N6-succinyllysine). 3 positions are modified to N6-acetyllysine; alternate: Lys-100, Lys-158, and Lys-162. Residues Lys-100, Lys-158, and Lys-162 each carry the N6-succinyllysine; alternate modification. N6-acetyllysine is present on residues Lys-172, Lys-176, and Lys-192. Lys-199 carries the post-translational modification N6-succinyllysine.

The protein belongs to the ATPase delta chain family. In terms of assembly, component of the ATP synthase complex composed at least of ATP5F1A/subunit alpha, ATP5F1B/subunit beta, ATP5MC1/subunit c (homooctomer), MT-ATP6/subunit a, MT-ATP8/subunit 8, ATP5ME/subunit e, ATP5MF/subunit f, ATP5MG/subunit g, ATP5MK/subunit k, ATP5MJ/subunit j, ATP5F1C/subunit gamma, ATP5F1D/subunit delta, ATP5F1E/subunit epsilon, ATP5PF/subunit F6, ATP5PB/subunit b, ATP5PD/subunit d, ATP5PO/subunit OSCP. ATP synthase complex consists of a soluble F(1) head domain (subunits alpha(3) and beta(3)) - the catalytic core - and a membrane F(0) domain - the membrane proton channel (subunits c, a, 8, e, f, g, k and j). These two domains are linked by a central stalk (subunits gamma, delta, and epsilon) rotating inside the F1 region and a stationary peripheral stalk (subunits F6, b, d, and OSCP). In terms of processing, acetylation at Lys-162 decreases ATP production. Deacetylated by SIRT3. Post-translationally, in response to mitochondrial stress, the precursor protein is ubiquitinated by the SIFI complex in the cytoplasm before mitochondrial import, leading to its degradation. Within the SIFI complex, UBR4 initiates ubiquitin chain that are further elongated or branched by KCMF1.

It is found in the mitochondrion. The protein localises to the mitochondrion inner membrane. Subunit OSCP, of the mitochondrial membrane ATP synthase complex (F(1)F(0) ATP synthase or Complex V) that produces ATP from ADP in the presence of a proton gradient across the membrane which is generated by electron transport complexes of the respiratory chain. ATP synthase complex consist of a soluble F(1) head domain - the catalytic core - and a membrane F(1) domain - the membrane proton channel. These two domains are linked by a central stalk rotating inside the F(1) region and a stationary peripheral stalk. During catalysis, ATP synthesis in the catalytic domain of F(1) is coupled via a rotary mechanism of the central stalk subunits to proton translocation. In vivo, can only synthesize ATP although its ATP hydrolase activity can be activated artificially in vitro. Part of the complex F(0) domain. Part of the complex F(0) domain and the peripheric stalk, which acts as a stator to hold the catalytic alpha(3)beta(3) subcomplex and subunit a/ATP6 static relative to the rotary elements. This is ATP synthase peripheral stalk subunit OSCP, mitochondrial from Sus scrofa (Pig).